The sequence spans 648 residues: Cell surface glycoprotein MUC18 (648 aa).

The N-terminal stretch at 1 to 23 (MGLPRLVCAFLFAACCCCRSATG) is a signal peptide. Ig-like V-type domains are found at residues 24–131 (VPGE…HYVQ) and 141–244 (PTIQ…KEVT). At 24–560 (VPGEEKQPTP…EKKLPQQESK (537 aa)) the chain is on the extracellular side. 5 cysteine pairs are disulfide-bonded: cysteine 50-cysteine 118, cysteine 163-cysteine 225, cysteine 274-cysteine 322, cysteine 367-cysteine 409, and cysteine 454-cysteine 501. The N-linked (GlcNAc...) asparagine glycan is linked to asparagine 58. 3 Ig-like C2-type domains span residues 246–332 (PVLY…TTVM), 337–426 (PLEL…RRVS), and 432–512 (SPWM…SNTT). Residues 282–304 (PHFTINKKNPSTEEMEEESTDEN) are disordered. Asparagine 510 is a glycosylation site (N-linked (GlcNAc...) asparagine). Over residues 527 to 549 (DSSQTTGLSTPTVSPHSRANSTS) the composition is skewed to polar residues. Residues 527-554 (DSSQTTGLSTPTVSPHSRANSTSTEKKL) form a disordered region. Residues 561 to 581 (GVVIVAVIVCTLVLAVLGATL) form a helical membrane-spanning segment. Residues 582 to 648 (YYFYKKGKLP…QGEKYIDLRH (67 aa)) lie on the Cytoplasmic side of the membrane. Phosphoserine is present on residues serine 608 and serine 616. The disordered stretch occupies residues 626–648 (LQGSNGDKRAPGDQGEKYIDLRH). The span at 631–648 (GDKRAPGDQGEKYIDLRH) shows a compositional bias: basic and acidic residues.

Detected in lung, uterus and placenta (at protein level). Detected in heart, lung, kidney, adrenal gland, intestine, testis, skeletal muscle and aorta. Detected at low levels in adult brain, in particular in brain stem and spinal cord, but also in hippocampus, olfactory bulb and striatum (at protein level).

It is found in the cell membrane. The protein resides in the perikaryon. Functionally, plays a role in cell adhesion, and in cohesion of the endothelial monolayer at intercellular junctions in vascular tissue. Its expression may allow melanoma cells to interact with cellular elements of the vascular system, thereby enhancing hematogeneous tumor spread. Could be an adhesion molecule active in neural crest cells during embryonic development. Acts as a surface receptor that triggers tyrosine phosphorylation of FYN and PTK2/FAK1, and a transient increase in the intracellular calcium concentration. The protein is Cell surface glycoprotein MUC18 (Mcam) of Rattus norvegicus (Rat).